A 149-amino-acid chain; its full sequence is MASKRISRELRDMQRHPPANCSAGPVAEEDIFHWQATIMGPHDSPYSGGVFTVSIDFSSDYPFKPPKVNFKTKVYHPNIDSKGSICLDILKEQWSPAPTTSKVLLSICSLLTDPNPNDPLVPEIAHLYKVDKSKYESTAQKWTQKYAMG.

Residues Met1–Arg15 show a composition bias toward basic and acidic residues. The segment at Met1 to Ser22 is disordered. In terms of domain architecture, UBC core spans Met1–Met148. Catalysis depends on Cys86, which acts as the Glycyl thioester intermediate.

Belongs to the ubiquitin-conjugating enzyme family. Ubiquitously expressed at very low levels.

It carries out the reaction S-ubiquitinyl-[E1 ubiquitin-activating enzyme]-L-cysteine + [E2 ubiquitin-conjugating enzyme]-L-cysteine = [E1 ubiquitin-activating enzyme]-L-cysteine + S-ubiquitinyl-[E2 ubiquitin-conjugating enzyme]-L-cysteine.. It participates in protein modification; protein ubiquitination. Its function is as follows. Accepts the ubiquitin from the E1 complex and catalyzes its covalent attachment to other proteins. This is Probable ubiquitin-conjugating enzyme E2 12 (UBC12) from Arabidopsis thaliana (Mouse-ear cress).